A 116-amino-acid polypeptide reads, in one-letter code: Large ribosomal subunit protein bL20 (116 aa).

This sequence belongs to the bacterial ribosomal protein bL20 family.

In terms of biological role, binds directly to 23S ribosomal RNA and is necessary for the in vitro assembly process of the 50S ribosomal subunit. It is not involved in the protein synthesizing functions of that subunit. This chain is Large ribosomal subunit protein bL20 (rplT), found in Helicobacter pylori (strain ATCC 700392 / 26695) (Campylobacter pylori).